The primary structure comprises 472 residues: 3-isopropylmalate dehydratase large subunit (472 aa).

The [4Fe-4S] cluster site is built by Cys353, Cys414, and Cys417.

The protein belongs to the aconitase/IPM isomerase family. LeuC type 1 subfamily. Heterodimer of LeuC and LeuD. The cofactor is [4Fe-4S] cluster.

It catalyses the reaction (2R,3S)-3-isopropylmalate = (2S)-2-isopropylmalate. The protein operates within amino-acid biosynthesis; L-leucine biosynthesis; L-leucine from 3-methyl-2-oxobutanoate: step 2/4. Functionally, catalyzes the isomerization between 2-isopropylmalate and 3-isopropylmalate, via the formation of 2-isopropylmaleate. The chain is 3-isopropylmalate dehydratase large subunit from Psychrobacter arcticus (strain DSM 17307 / VKM B-2377 / 273-4).